We begin with the raw amino-acid sequence, 568 residues long: Protein OCTOPUS-like (568 aa).

7 disordered regions span residues 1-27 (MNLS…RLST), 78-99 (LFKP…RPGF), 168-203 (EEAE…ELKP), 242-276 (QKQK…PRFS), 360-428 (PGGS…DKKS), 446-512 (DDEE…SKDG), and 526-558 (RSWK…SHGH). Over residues 82 to 93 (SSSGTNNSNGNG) the composition is skewed to low complexity. Residues 168–179 (EEAEIEEDEENG) are compositionally biased toward acidic residues. Over residues 180–193 (EKDPGEIVEEKSSE) the composition is skewed to basic and acidic residues. A Phosphoserine modification is found at S260. Positions 400–423 (SVSNSTTTIDSNSMETAENKGNQN) are enriched in polar residues. Gly residues predominate over residues 532 to 546 (GGSGGGGGGGGGGGW).

The protein belongs to the OCTOPUS family. In terms of processing, phosphorylation at Ser-260 amplifies the promotion of protophloem differentiation.

It is found in the cell membrane. Its subcellular location is the cytoplasm. Its function is as follows. Potentiates primary root protophloem differentiation. Regulates roots architecture. This Arabidopsis thaliana (Mouse-ear cress) protein is Protein OCTOPUS-like.